The chain runs to 245 residues: Aliphatic sulfonates import ATP-binding protein SsuB 1 (245 aa).

Residues 8 to 223 enclose the ABC transporter domain; sequence VSITGLRKSF…ERADPDILRY (216 aa). Residue 40 to 47 participates in ATP binding; that stretch reads GPSGTGKT.

Belongs to the ABC transporter superfamily. Aliphatic sulfonates importer (TC 3.A.1.17.2) family. As to quaternary structure, the complex is composed of two ATP-binding proteins (SsuB), two transmembrane proteins (SsuC) and a solute-binding protein (SsuA).

It localises to the cell membrane. The enzyme catalyses ATP + H2O + aliphatic sulfonate-[sulfonate-binding protein]Side 1 = ADP + phosphate + aliphatic sulfonateSide 2 + [sulfonate-binding protein]Side 1.. Functionally, part of the ABC transporter complex SsuABC involved in aliphatic sulfonates import. Responsible for energy coupling to the transport system. The polypeptide is Aliphatic sulfonates import ATP-binding protein SsuB 1 (Nocardia farcinica (strain IFM 10152)).